A 66-amino-acid chain; its full sequence is DNA-directed RNA polymerase subunit omega (66 aa).

The protein belongs to the RNA polymerase subunit omega family. As to quaternary structure, the RNAP catalytic core consists of 2 alpha, 1 beta, 1 beta' and 1 omega subunit. When a sigma factor is associated with the core the holoenzyme is formed, which can initiate transcription.

The catalysed reaction is RNA(n) + a ribonucleoside 5'-triphosphate = RNA(n+1) + diphosphate. Promotes RNA polymerase assembly. Latches the N- and C-terminal regions of the beta' subunit thereby facilitating its interaction with the beta and alpha subunits. The chain is DNA-directed RNA polymerase subunit omega from Clostridium botulinum (strain Alaska E43 / Type E3).